The following is a 406-amino-acid chain: Cysteine desulfurase (406 aa).

Lys-226 carries the post-translational modification N6-(pyridoxal phosphate)lysine. The active-site Cysteine persulfide intermediate is the Cys-364.

This sequence belongs to the class-V pyridoxal-phosphate-dependent aminotransferase family. Csd subfamily. In terms of assembly, homodimer. Interacts with SufE and the SufBCD complex composed of SufB, SufC and SufD. The interaction with SufE is required to mediate the direct transfer of the sulfur atom from the S-sulfanylcysteine. Pyridoxal 5'-phosphate serves as cofactor.

Its subcellular location is the cytoplasm. The catalysed reaction is (sulfur carrier)-H + L-cysteine = (sulfur carrier)-SH + L-alanine. The enzyme catalyses L-selenocysteine + AH2 = hydrogenselenide + L-alanine + A + H(+). It participates in cofactor biosynthesis; iron-sulfur cluster biosynthesis. Cysteine desulfurases mobilize the sulfur from L-cysteine to yield L-alanine, an essential step in sulfur metabolism for biosynthesis of a variety of sulfur-containing biomolecules. Component of the suf operon, which is activated and required under specific conditions such as oxidative stress and iron limitation. Acts as a potent selenocysteine lyase in vitro, that mobilizes selenium from L-selenocysteine. Selenocysteine lyase activity is however unsure in vivo. The protein is Cysteine desulfurase of Yersinia pestis bv. Antiqua (strain Antiqua).